The primary structure comprises 367 residues: Isoflavone 4'-O-methyltransferase (367 aa).

Residues 209 to 212 (VGGG), Asp233, 233 to 234 (DQ), 253 to 254 (DM), and Lys267 contribute to the S-adenosyl-L-methionine site. The active-site Proton acceptor is the His271.

The protein belongs to the class I-like SAM-binding methyltransferase superfamily. Cation-independent O-methyltransferase family. COMT subfamily.

The enzyme catalyses a 4'-hydroxyisoflavone + S-adenosyl-L-methionine = a 4'-methoxyisoflavone + S-adenosyl-L-homocysteine + H(+). It carries out the reaction (2R,3S)-2,4',7-trihydroxyisoflavanone + S-adenosyl-L-methionine = (2R,3S)-2,7-dihydroxy-4'-methoxyisoflavanone + S-adenosyl-L-homocysteine + H(+). In terms of biological role, 2-hydroxyisoflavanone 4'-O-methyltransferase involved in the biosynthesis of formononetin. Can use 2,7,4'-trihydroxyisoflavanone, (+)-6a-hydroxymaackiain or medicarpin as substrate, but not daidzein or (-)-6a-hydroxymaackiain. The protein is Isoflavone 4'-O-methyltransferase (HI4'OMT) of Glycyrrhiza echinata (Licorice).